Consider the following 252-residue polypeptide: Protein PYRAB15930 (252 aa).

Belongs to the CinA family.

The chain is Protein PYRAB15930 from Pyrococcus abyssi (strain GE5 / Orsay).